Here is a 445-residue protein sequence, read N- to C-terminus: Probable glycine dehydrogenase (decarboxylating) subunit 1 (445 aa).

It belongs to the GcvP family. N-terminal subunit subfamily. In terms of assembly, the glycine cleavage system is composed of four proteins: P, T, L and H. In this organism, the P 'protein' is a heterodimer of two subunits.

It catalyses the reaction N(6)-[(R)-lipoyl]-L-lysyl-[glycine-cleavage complex H protein] + glycine + H(+) = N(6)-[(R)-S(8)-aminomethyldihydrolipoyl]-L-lysyl-[glycine-cleavage complex H protein] + CO2. Functionally, the glycine cleavage system catalyzes the degradation of glycine. The P protein binds the alpha-amino group of glycine through its pyridoxal phosphate cofactor; CO(2) is released and the remaining methylamine moiety is then transferred to the lipoamide cofactor of the H protein. This is Probable glycine dehydrogenase (decarboxylating) subunit 1 from Chlorobium chlorochromatii (strain CaD3).